The chain runs to 292 residues: 4-hydroxy-tetrahydrodipicolinate synthase (292 aa).

Thr-45 is a pyruvate binding site. The active-site Proton donor/acceptor is the Tyr-133. Lys-161 functions as the Schiff-base intermediate with substrate in the catalytic mechanism. A pyruvate-binding site is contributed by Ile-203.

Belongs to the DapA family. As to quaternary structure, homotetramer; dimer of dimers.

It localises to the cytoplasm. The catalysed reaction is L-aspartate 4-semialdehyde + pyruvate = (2S,4S)-4-hydroxy-2,3,4,5-tetrahydrodipicolinate + H2O + H(+). The protein operates within amino-acid biosynthesis; L-lysine biosynthesis via DAP pathway; (S)-tetrahydrodipicolinate from L-aspartate: step 3/4. In terms of biological role, catalyzes the condensation of (S)-aspartate-beta-semialdehyde [(S)-ASA] and pyruvate to 4-hydroxy-tetrahydrodipicolinate (HTPA). This is 4-hydroxy-tetrahydrodipicolinate synthase from Aromatoleum aromaticum (strain DSM 19018 / LMG 30748 / EbN1) (Azoarcus sp. (strain EbN1)).